A 476-amino-acid polypeptide reads, in one-letter code: MSRFSGALQLTDLDDFITPSQECIKPVTIDKTKSKTGSKITVQADGYYEESESGKQKLQKVEITLQDCLACSGCITSAEGVLITQQSQEELLKVLRENERLKASGDSDKVRTIVFTIAVQPLISLAHRFELGVEEAARHLSGYLRQLGADYVLSTKIADDLALLECRQEFVERYRDNADLSMLSSSCPGWVCYAEKTHGNFILPHIATTRSPQQIMGVLVKQRLAEKLGVSGSRIYHVTVMPCYDKKLEASREDFYSEVNSSRDVDCVITSIEVEQMLQTEEQTLQQFAPSDMDWPWTDQPPEAMVWAHESTMSGGYAEHIYKYAARELFNEETPNELQFKALRNRDFSEISLEKDGKIVLKFAIANGFRNIQNLMQKLKRGKGPGYHFVEVMACPSGCINGGAQVRPTTGQHVRELTQQLEELYKQLPRSNPDNAHTKHIYTDFLDGTQTDKSQSLLHTSYHAVEKLNTALNIKW.

Residues C23, C68, C71, C74, C187, C243, C395, and C399 each coordinate [4Fe-4S] cluster.

The protein belongs to the NARF family.

Component of the cytosolic iron-sulfur (Fe/S) protein assembly machinery. Required for maturation of extramitochondrial Fe/S proteins. In Drosophila mojavensis (Fruit fly), this protein is Probable cytosolic Fe-S cluster assembly factor GI11683.